The sequence spans 358 residues: UDP-N-acetylglucosamine--N-acetylmuramyl-(pentapeptide) pyrophosphoryl-undecaprenol N-acetylglucosamine transferase (358 aa).

UDP-N-acetyl-alpha-D-glucosamine-binding positions include Thr11–Gly13, Asn122, Arg161, Ser189, Ile243, Ala262–Glu267, and Gln288.

The protein belongs to the glycosyltransferase 28 family. MurG subfamily.

It localises to the cell inner membrane. The enzyme catalyses di-trans,octa-cis-undecaprenyl diphospho-N-acetyl-alpha-D-muramoyl-L-alanyl-D-glutamyl-meso-2,6-diaminopimeloyl-D-alanyl-D-alanine + UDP-N-acetyl-alpha-D-glucosamine = di-trans,octa-cis-undecaprenyl diphospho-[N-acetyl-alpha-D-glucosaminyl-(1-&gt;4)]-N-acetyl-alpha-D-muramoyl-L-alanyl-D-glutamyl-meso-2,6-diaminopimeloyl-D-alanyl-D-alanine + UDP + H(+). It participates in cell wall biogenesis; peptidoglycan biosynthesis. In terms of biological role, cell wall formation. Catalyzes the transfer of a GlcNAc subunit on undecaprenyl-pyrophosphoryl-MurNAc-pentapeptide (lipid intermediate I) to form undecaprenyl-pyrophosphoryl-MurNAc-(pentapeptide)GlcNAc (lipid intermediate II). In Coxiella burnetii (strain CbuK_Q154) (Coxiella burnetii (strain Q154)), this protein is UDP-N-acetylglucosamine--N-acetylmuramyl-(pentapeptide) pyrophosphoryl-undecaprenol N-acetylglucosamine transferase.